Reading from the N-terminus, the 549-residue chain is MAFNDLLLQLGGVGRFQKIQVTLVILPLILLASHNTLQNFTAAIPTHHCRPPADTNLSEDGDLEAWLPRDGQGRPESCLLFTSPQRGPPFPNGTETNGTGATEPCPHGWIYDNSTFPSTIVTEWDLVCSHRALRQLAQSLYMMGVLLGAMTFGCLADRLGRRKVLIFNYLQTAVSGTCAAFAPNFPAYCAFRFLSGMSTAGVVLNCMTLNVEWMPIHTRAYVGTLTGYVYSLGQFLLAGMAYAVPHWRYLQLLVSAPFFAFFIYSWFFIESARWYASSGRLDLTLRNLQRVAWINGKQEEGANLSMEALQASLKKELTTGKSQASALELIRCPALRRLFLCLSMLWFATSFAYYGLVMDLQGFGVSIYLIQVIFGAVDLPAKLVSFLVINNVGRRPAQMASLLLAGICILINGVVPKDKSIVRTSLAVLGKGCLASSFNCIFLYTGEVYPTMIRQTGLGMGSTLARVGSIVSPLVSMTAELYPSVPLFIYGAVPVAASAAIALLPETLGQPLPDTVQDVENRRRGKTRKQQEELQKQMVPLQASAQVKN.

Residues 1–23 (MAFNDLLLQLGGVGRFQKIQVTL) lie on the Cytoplasmic side of the membrane. The helical transmembrane segment at 24–44 (VILPLILLASHNTLQNFTAAI) threads the bilayer. Over 45-135 (PTHHCRPPAD…LVCSHRALRQ (91 aa)) the chain is Extracellular. Asn56, Asn92, and Asn113 each carry an N-linked (GlcNAc...) asparagine glycan. The chain crosses the membrane as a helical span at residues 136-156 (LAQSLYMMGVLLGAMTFGCLA). Topologically, residues 157 to 164 (DRLGRRKV) are cytoplasmic. The helical transmembrane segment at 165–185 (LIFNYLQTAVSGTCAAFAPNF) threads the bilayer. At 186-195 (PAYCAFRFLS) the chain is on the extracellular side. A helical transmembrane segment spans residues 196–216 (GMSTAGVVLNCMTLNVEWMPI). The Cytoplasmic segment spans residues 217-224 (HTRAYVGT). The helical transmembrane segment at 225–245 (LTGYVYSLGQFLLAGMAYAVP) threads the bilayer. Over 246–248 (HWR) the chain is Extracellular. Residues 249 to 269 (YLQLLVSAPFFAFFIYSWFFI) traverse the membrane as a helical segment. Topologically, residues 270 to 337 (ESARWYASSG…ELIRCPALRR (68 aa)) are cytoplasmic. Residues 338-358 (LFLCLSMLWFATSFAYYGLVM) traverse the membrane as a helical segment. Over 359–368 (DLQGFGVSIY) the chain is Extracellular. The chain crosses the membrane as a helical span at residues 369–389 (LIQVIFGAVDLPAKLVSFLVI). At 390-395 (NNVGRR) the chain is on the cytoplasmic side. The helical transmembrane segment at 396–416 (PAQMASLLLAGICILINGVVP) threads the bilayer. Residues 417-425 (KDKSIVRTS) are Extracellular-facing. The chain crosses the membrane as a helical span at residues 426–446 (LAVLGKGCLASSFNCIFLYTG). Topologically, residues 447–456 (EVYPTMIRQT) are cytoplasmic. The helical transmembrane segment at 457 to 477 (GLGMGSTLARVGSIVSPLVSM) threads the bilayer. Over 478-484 (TAELYPS) the chain is Extracellular. The helical transmembrane segment at 485-505 (VPLFIYGAVPVAASAAIALLP) threads the bilayer. The Cytoplasmic portion of the chain corresponds to 506–549 (ETLGQPLPDTVQDVENRRRGKTRKQQEELQKQMVPLQASAQVKN). A disordered region spans residues 521–549 (NRRRGKTRKQQEELQKQMVPLQASAQVKN).

This sequence belongs to the major facilitator (TC 2.A.1) superfamily. Organic cation transporter (TC 2.A.1.19) family. Post-translationally, glycosylated. Glycosylation is necessary for proper targeting of the transporter to the plasma membrane.

The protein resides in the basolateral cell membrane. It localises to the basal cell membrane. It catalyses the reaction (6R)-L-erythro-5,6,7,8-tetrahydrobiopterin(out) + a dicarboxylate(in) = (6R)-L-erythro-5,6,7,8-tetrahydrobiopterin(in) + a dicarboxylate(out). The enzyme catalyses L-erythro-7,8-dihydrobiopterin(out) + a dicarboxylate(in) = L-erythro-7,8-dihydrobiopterin(in) + a dicarboxylate(out). It carries out the reaction L-sepiapterin(out) + a dicarboxylate(in) = L-sepiapterin(in) + a dicarboxylate(out). The catalysed reaction is prostaglandin F2alpha(out) + a dicarboxylate(in) = prostaglandin F2alpha(in) + a dicarboxylate(out). It catalyses the reaction prostaglandin E2(out) + a dicarboxylate(in) = prostaglandin E2(in) + a dicarboxylate(out). The enzyme catalyses 3',5'-cyclic AMP(out) + a dicarboxylate(in) = 3',5'-cyclic AMP(in) + a dicarboxylate(out). It carries out the reaction 3',5'-cyclic GMP(out) + a dicarboxylate(in) = 3',5'-cyclic GMP(in) + a dicarboxylate(out). The catalysed reaction is urate(out) + a dicarboxylate(in) = urate(in) + a dicarboxylate(out). It catalyses the reaction kynurenate(out) + glutarate(in) = kynurenate(in) + glutarate(out). The enzyme catalyses (indol-3-yl)acetate(out) + a dicarboxylate(in) = (indol-3-yl)acetate(in) + a dicarboxylate(out). It carries out the reaction indoxyl sulfate(out) + a dicarboxylate(in) = indoxyl sulfate(in) + a dicarboxylate(out). The catalysed reaction is N-benzoylglycine(out) + a dicarboxylate(in) = N-benzoylglycine(in) + a dicarboxylate(out). It catalyses the reaction 3-carboxy-4-methyl-5-propyl-2-furanpropanoate(out) + a dicarboxylate(in) = 3-carboxy-4-methyl-5-propyl-2-furanpropanoate(in) + a dicarboxylate(out). Its function is as follows. Secondary active transporter that functions as a Na(+)-independent organic anion (OA)/dicarboxylate antiporter where the uptake of one molecule of OA into the cell is coupled with an efflux of one molecule of intracellular dicarboxylate such as 2-oxoglutarate or glutarate. Mediates the uptake of OA across the basolateral side of proximal tubule epithelial cells, thereby contributing to the renal elimination of endogenous OA from the systemic circulation into the urine. Functions as a biopterin transporters involved in the uptake and the secretion of coenzymes tetrahydrobiopterin (BH4), dihydrobiopterin (BH2) and sepiapterin to urine, thereby determining baseline levels of blood biopterins. Transports prostaglandin E2 (PGE2) and prostaglandin F2-alpha (PGF2-alpha) and may contribute to their renal excretion. Also mediates the uptake of cyclic nucleotides such as cAMP and cGMP. Involved in the transport of neuroactive tryptophan metabolites kynurenate (KYNA) and xanthurenate (XA) and may contribute to their secretion from the brain. May transport glutamate. Also involved in the disposition of uremic toxins and potentially toxic xenobiotics by the renal organic anion secretory pathway, helping reduce their undesired toxicological effects on the body. Uremic toxins include the indoxyl sulfate (IS), hippurate/N-benzoylglycine (HA), indole acetate (IA), 3-carboxy-4- methyl-5-propyl-2-furanpropionate (CMPF) and urate. Xenobiotics include the mycotoxin ochratoxin (OTA). May also contribute to the transport of organic compounds in testes across the blood-testis-barrier. This Bos taurus (Bovine) protein is Solute carrier family 22 member 6.